Here is a 176-residue protein sequence, read N- to C-terminus: Large ribosomal subunit protein uL6 (176 aa).

The protein belongs to the universal ribosomal protein uL6 family. As to quaternary structure, part of the 50S ribosomal subunit.

Functionally, this protein binds to the 23S rRNA, and is important in its secondary structure. It is located near the subunit interface in the base of the L7/L12 stalk, and near the tRNA binding site of the peptidyltransferase center. The sequence is that of Large ribosomal subunit protein uL6 from Burkholderia multivorans (strain ATCC 17616 / 249).